Consider the following 201-residue polypeptide: Holliday junction branch migration complex subunit RuvA (201 aa).

The segment at Met1–Thr64 is domain I. Positions Thr65–Gln143 are domain II. The segment at Leu144–Ser152 is flexible linker. The domain III stretch occupies residues Asp153 to Arg201.

The protein belongs to the RuvA family. Homotetramer. Forms an RuvA(8)-RuvB(12)-Holliday junction (HJ) complex. HJ DNA is sandwiched between 2 RuvA tetramers; dsDNA enters through RuvA and exits via RuvB. An RuvB hexamer assembles on each DNA strand where it exits the tetramer. Each RuvB hexamer is contacted by two RuvA subunits (via domain III) on 2 adjacent RuvB subunits; this complex drives branch migration. In the full resolvosome a probable DNA-RuvA(4)-RuvB(12)-RuvC(2) complex forms which resolves the HJ.

The protein resides in the cytoplasm. In terms of biological role, the RuvA-RuvB-RuvC complex processes Holliday junction (HJ) DNA during genetic recombination and DNA repair, while the RuvA-RuvB complex plays an important role in the rescue of blocked DNA replication forks via replication fork reversal (RFR). RuvA specifically binds to HJ cruciform DNA, conferring on it an open structure. The RuvB hexamer acts as an ATP-dependent pump, pulling dsDNA into and through the RuvAB complex. HJ branch migration allows RuvC to scan DNA until it finds its consensus sequence, where it cleaves and resolves the cruciform DNA. In Clostridium perfringens (strain 13 / Type A), this protein is Holliday junction branch migration complex subunit RuvA.